The chain runs to 544 residues: Chaperonin GroEL (544 aa).

ATP contacts are provided by residues 29–32 (TLGP), 86–90 (DGTTT), Gly-413, 478–480 (NAA), and Asp-494.

The protein belongs to the chaperonin (HSP60) family. As to quaternary structure, forms a cylinder of 14 subunits composed of two heptameric rings stacked back-to-back. Interacts with the co-chaperonin GroES.

The protein localises to the cytoplasm. The enzyme catalyses ATP + H2O + a folded polypeptide = ADP + phosphate + an unfolded polypeptide.. Its function is as follows. Together with its co-chaperonin GroES, plays an essential role in assisting protein folding. The GroEL-GroES system forms a nano-cage that allows encapsulation of the non-native substrate proteins and provides a physical environment optimized to promote and accelerate protein folding. This Lysinibacillus sphaericus (strain C3-41) protein is Chaperonin GroEL.